Here is a 502-residue protein sequence, read N- to C-terminus: Beta-amyrin 28-monooxygenase CYP716A379 (502 aa).

A helical; Signal-anchor for type II membrane protein transmembrane segment spans residues 3–23 (LITLLSALLVLAIVSLSTFFV). Residues Asn88 and Asn181 are each glycosylated (N-linked (GlcNAc...) asparagine). Heme is bound at residue Cys444.

This sequence belongs to the cytochrome P450 family. Requires heme as cofactor. In terms of tissue distribution, mainly expressed in flowers and flower buds, to a lesser extent in young leaves and, at low levels, in old leaves, stems and roots.

The protein resides in the membrane. It catalyses the reaction beta-amyrin + 3 reduced [NADPH--hemoprotein reductase] + 3 O2 = oleanolate + 3 oxidized [NADPH--hemoprotein reductase] + 4 H2O + 4 H(+). Its pathway is secondary metabolite biosynthesis; terpenoid biosynthesis. Component of the oleanane-type triterpene saponins (e.g. saponarioside A and saponarioside B) biosynthetic pathway, leading to the production of natural products with detergent properties used as traditional sources of soap. An oxidoreductase that facilitates the oxidation of the methyl group to a carboxyl group at the C-28 position of beta-amyrin, resulting in the formation of oleanolic acid. Catalyzes also the subsequent oxidation of the methyl group to a&lt; carboxyl group at the C-16 alpha position of oleanolic acid, resulting in the formation of echinocystic acid. The chain is Beta-amyrin 28-monooxygenase CYP716A379 from Saponaria officinalis (Common soapwort).